Here is a 149-residue protein sequence, read N- to C-terminus: IPVEVLAQGAWVLTDPAFVEAVGPESQVEAAVSAVGLDLGDEVVLFPLGPEGPLEGVELRPNRVRVVERREALFLKEVPLSLNPPPGRRLLDYAPKTVRLVGPREALEGLAGVTATLQEALGPGEVEVAVAPDLPPGSIPWDRFGCGLR.

Residues 1–68 form the YbbR-like domain; that stretch reads IPVEVLAQGA…LRPNRVRVVE (68 aa).

The polypeptide is YbbR-like domain-containing protein in def 5'region (Thermus thermophilus).